A 269-amino-acid chain; its full sequence is Histone deacetylase HDT1 (269 aa).

The segment at 97-269 (PFEEEEDDED…HSKAKHSAGK (173 aa)) is disordered. 2 stretches are compositionally biased toward acidic residues: residues 98 to 115 (FEEE…DEDI) and 153 to 179 (KDDE…DSEE). Positions 228–238 (PSKQASKTPKS) are enriched in polar residues. The C2H2-type zinc finger occupies 242–265 (HHCKPCNRSFGSEGALDSHSKAKH).

Belongs to the histone deacetylase HD2 family. In terms of tissue distribution, predominantly expressed in ovaries. Accumulates predominantly in the micropylar region of the ovule's integument.

The protein localises to the nucleus. Its subcellular location is the nucleolus. In terms of biological role, mediates the deacetylation of lysine residues on the N-terminal part of the core histones (H2A, H2B, H3 and H4). Histone deacetylation gives a tag for epigenetic repression and plays an important role in transcriptional regulation, cell cycle progression and developmental events. In Solanum chacoense (Chaco potato), this protein is Histone deacetylase HDT1 (HDT1).